The primary structure comprises 263 residues: MERQKISEKFSELREKKEGALICYVMAGDPSAEKTGEIVKALVNGGADIIELGFPFSDPVADGPTIQVAGQRSLAAGMDTQRYFELIKNLDVGIPLVCMTYYNPVFRYGVEKFVEKAADAGISGLIVPDIPVEEAADLKNSCEKHGLDLIFLIAPTTTEGRVQKILERGSGFLYLVSRLGVTGAREDVSSSTRELLSRVETGLPKAVGFGISTGEQAAEVRDAGADAVIVGSAFVKIIDEGKDVNERLEALAKELKSGIKRAS.

Residues glutamate 51 and aspartate 62 each act as proton acceptor in the active site.

Belongs to the TrpA family. Tetramer of two alpha and two beta chains.

It carries out the reaction (1S,2R)-1-C-(indol-3-yl)glycerol 3-phosphate + L-serine = D-glyceraldehyde 3-phosphate + L-tryptophan + H2O. Its pathway is amino-acid biosynthesis; L-tryptophan biosynthesis; L-tryptophan from chorismate: step 5/5. The alpha subunit is responsible for the aldol cleavage of indoleglycerol phosphate to indole and glyceraldehyde 3-phosphate. The sequence is that of Tryptophan synthase alpha chain from Methanosarcina barkeri (strain Fusaro / DSM 804).